The sequence spans 335 residues: Transcription factor bHLH63 (335 aa).

The interval 110–160 (MTMNRDDLVEEGEEEKSKITEQNNGSTKSIKKMKHKAKKEENNFSNDSSKV) is disordered. The bHLH domain occupies 178-228 (QATDSHSIAERVRREKISERMKFLQDLVPGCDKITGKAGMLDEIINYVQSL).

As to quaternary structure, homodimer. Interacts with IBH1. Binds reversibly to CRY2 after blue light illumination. As to expression, expressed constitutively in roots, leaves, and stems.

The protein localises to the nucleus. Its function is as follows. Transcription factor that binds DNA to G box 5'-CACGTG-3' and, to a lower extent, to E-box 5'-CANNTG-3' in vitro. Binds to chromatin DNA of the FT gene and promotes its expression, and thus triggers flowering in response to blue light. This is Transcription factor bHLH63 (BHLH63) from Arabidopsis thaliana (Mouse-ear cress).